Reading from the N-terminus, the 146-residue chain is NADH-quinone oxidoreductase subunit A (146 aa).

3 helical membrane passes run 14 to 34 (FGLF…GGFL), 68 to 88 (LVAM…AWAV), and 96 to 116 (IGFI…IYLV).

It belongs to the complex I subunit 3 family. In terms of assembly, NDH-1 is composed of 13 different subunits. Subunits NuoA, H, J, K, L, M, N constitute the membrane sector of the complex.

The protein resides in the cell inner membrane. It carries out the reaction a quinone + NADH + 5 H(+)(in) = a quinol + NAD(+) + 4 H(+)(out). Its function is as follows. NDH-1 shuttles electrons from NADH, via FMN and iron-sulfur (Fe-S) centers, to quinones in the respiratory chain. The immediate electron acceptor for the enzyme in this species is believed to be ubiquinone. Couples the redox reaction to proton translocation (for every two electrons transferred, four hydrogen ions are translocated across the cytoplasmic membrane), and thus conserves the redox energy in a proton gradient. This chain is NADH-quinone oxidoreductase subunit A, found in Pectobacterium carotovorum subsp. carotovorum (Erwinia carotovora subsp. carotovora).